The following is a 120-amino-acid chain: Cytochrome c6 (120 aa).

Residues 1 to 35 (MFKLFNQASRIFFGIALPCLIFLGGIFSLGNTALA) form the signal peptide. Positions 49, 52, 53, and 93 each coordinate heme c.

It belongs to the cytochrome c family. PetJ subfamily. As to quaternary structure, monomer. Post-translationally, binds 1 heme c group covalently per subunit.

It localises to the cellular thylakoid lumen. In terms of biological role, functions as an electron carrier between membrane-bound cytochrome b6-f and photosystem I in oxygenic photosynthesis. The chain is Cytochrome c6 (petJ) from Synechocystis sp. (strain ATCC 27184 / PCC 6803 / Kazusa).